The sequence spans 415 residues: L-threonine dehydratase biosynthetic IlvA (415 aa).

Residue Lys-53 is modified to N6-(pyridoxal phosphate)lysine. Pyridoxal 5'-phosphate is bound by residues Asn-80, 183-187 (GGGGL), and Ser-308. An ACT-like domain is found at 332 to 406 (HYFIIQFPQR…KGFEYREINK (75 aa)).

The protein belongs to the serine/threonine dehydratase family. In terms of assembly, homotetramer. Pyridoxal 5'-phosphate serves as cofactor.

The enzyme catalyses L-threonine = 2-oxobutanoate + NH4(+). The protein operates within amino-acid biosynthesis; L-isoleucine biosynthesis; 2-oxobutanoate from L-threonine: step 1/1. Its function is as follows. Catalyzes the anaerobic formation of alpha-ketobutyrate and ammonia from threonine in a two-step reaction. The first step involved a dehydration of threonine and a production of enamine intermediates (aminocrotonate), which tautomerizes to its imine form (iminobutyrate). Both intermediates are unstable and short-lived. The second step is the nonenzymatic hydrolysis of the enamine/imine intermediates to form 2-ketobutyrate and free ammonia. In the low water environment of the cell, the second step is accelerated by RidA. The polypeptide is L-threonine dehydratase biosynthetic IlvA (ilvA) (Halalkalibacterium halodurans (strain ATCC BAA-125 / DSM 18197 / FERM 7344 / JCM 9153 / C-125) (Bacillus halodurans)).